Here is a 121-residue protein sequence, read N- to C-terminus: Large ribosomal subunit protein bL17 (121 aa).

This sequence belongs to the bacterial ribosomal protein bL17 family. Part of the 50S ribosomal subunit. Contacts protein L32.

This is Large ribosomal subunit protein bL17 from Mycoplasmopsis agalactiae (strain NCTC 10123 / CIP 59.7 / PG2) (Mycoplasma agalactiae).